The following is a 122-amino-acid chain: SVGTSCIPGMAIPHNPLDSCRWYVSTRTCGVGPRLATQEMKARCCRQLEAIPAYCRCEAVRILMDGVVTPSGQHEGRLLQDLPGCPRQVQRAFAPKLVTEVECNLATIHGGPFCLSLLGAGE.

Cystine bridges form between Cys6–Cys55, Cys20–Cys44, Cys29–Cys85, Cys45–Cys103, and Cys57–Cys114.

Belongs to the protease inhibitor I6 (cereal trypsin/alpha-amylase inhibitor) family. In terms of tissue distribution, seeds.

The protein resides in the secreted. Its function is as follows. May play a protective role against endo- and exogenous hydrolytic activities in the Ragi seeds. This is Alpha-amylase/trypsin inhibitor from Eleusine coracana (Indian finger millet).